Consider the following 114-residue polypeptide: Cytokine SCM-1 beta (114 aa).

Residues 1-21 form the signal peptide; it reads MRLLILALLGICSLTAYIVEG. Residues Cys-32 and Cys-69 are joined by a disulfide bond. Residues 91 to 114 form a disordered region; sequence RNNMIQTKPTGTQQSTNTAVTLTG.

This sequence belongs to the intercrine gamma family.

It is found in the secreted. Functionally, chemotactic activity for lymphocytes but not for monocytes or neutrophils. This is Cytokine SCM-1 beta (XCL2) from Homo sapiens (Human).